Consider the following 252-residue polypeptide: Triosephosphate isomerase (252 aa).

Substrate is bound at residue 10-12 (NWK). Catalysis depends on His96, which acts as the Electrophile. Glu168 functions as the Proton acceptor in the catalytic mechanism. Substrate-binding positions include Gly174, Ser214, and 235–236 (GG).

Belongs to the triosephosphate isomerase family. Homodimer.

Its subcellular location is the cytoplasm. It carries out the reaction D-glyceraldehyde 3-phosphate = dihydroxyacetone phosphate. Its pathway is carbohydrate biosynthesis; gluconeogenesis. The protein operates within carbohydrate degradation; glycolysis; D-glyceraldehyde 3-phosphate from glycerone phosphate: step 1/1. In terms of biological role, involved in the gluconeogenesis. Catalyzes stereospecifically the conversion of dihydroxyacetone phosphate (DHAP) to D-glyceraldehyde-3-phosphate (G3P). This Streptococcus mutans serotype c (strain ATCC 700610 / UA159) protein is Triosephosphate isomerase.